Here is a 3515-residue protein sequence, read N- to C-terminus: Microtubule-actin cross-linking factor 1, isoforms 6/7 (3515 aa).

7 disordered regions span residues methionine 1–glutamate 23, valine 108–phenylalanine 136, valine 155–histidine 196, threonine 965–threonine 1178, serine 1217–alanine 1298, glutamate 1710–glutamine 1730, and proline 3078–glutamine 3108. Positions proline 120 to asparagine 129 are enriched in basic and acidic residues. The segment at glutamate 157–asparagine 245 is 13 X 13 AA approximate tandem repeat of P-T-S-P-A-A-A-V-P-T-P-E-E. Composition is skewed to low complexity over residues serine 995–alanine 1031 and threonine 1040–threonine 1139. 13 tandem repeats follow at residues glutamate 1012 to glutamate 1024, proline 1026 to glutamate 1037, glutamate 1038 to glutamate 1051, proline 1052 to glutamate 1064, proline 1065 to glutamate 1077, proline 1078 to glutamate 1090, proline 1091 to glutamate 1103, proline 1104 to glutamate 1116, proline 1117 to glutamate 1129, proline 1130 to glutamate 1142, proline 1143 to glutamate 1155, serine 1156 to glutamate 1168, and serine 1169 to threonine 1178. Residues proline 1140–proline 1151 show a composition bias toward pro residues. 2 stretches are compositionally biased toward low complexity: residues alanine 1162–threonine 1178 and serine 1268–alanine 1298. Over residues serine 1715–glutamine 1730 the composition is skewed to polar residues. EF-hand domains lie at histidine 3168 to proline 3203 and threonine 3204 to alanine 3239. Residues aspartate 3181, aspartate 3183, aspartate 3185, lysine 3187, glutamate 3192, aspartate 3217, aspartate 3219, aspartate 3221, tyrosine 3223, and glutamate 3228 each coordinate Ca(2+). The 73-residue stretch at threonine 3244–arginine 3316 folds into the GAR domain. The tract at residues proline 3332–arginine 3515 is disordered. Positions serine 3352–threonine 3386 are enriched in low complexity. Residues threonine 3402–lysine 3426 show a composition bias toward polar residues. A compositionally biased stretch (low complexity) spans serine 3437–alanine 3451. Residues glutamate 3466–arginine 3488 show a composition bias toward polar residues.

It is found in the cytoplasm. The protein resides in the cytoskeleton. In Homo sapiens (Human), this protein is Microtubule-actin cross-linking factor 1, isoforms 6/7.